Reading from the N-terminus, the 782-residue chain is U-box domain-containing protein 7 (782 aa).

Residues 271–345 (VPPEELRCPI…ASWCEQNGTQ (75 aa)) form the U-box domain. ARM repeat units lie at residues 456 to 499 (EEAR…NLAV), 502 to 541 (NRNK…SCLD), 542 to 581 (EAKS…NLST), 583 to 623 (SPNI…NLAS), and 626 to 665 (EGKD…ILCN). The segment covering 707–729 (EERQQRDQPSSNRDEPPQKEPAR) has biased composition (basic and acidic residues). The tract at residues 707–765 (EERQQRDQPSSNRDEPPQKEPARKSLSAPLSVHGSTPASASVQDYEPRVLSKSMSRRKS) is disordered. The segment covering 739-748 (HGSTPASASV) has biased composition (polar residues).

The catalysed reaction is S-ubiquitinyl-[E2 ubiquitin-conjugating enzyme]-L-cysteine + [acceptor protein]-L-lysine = [E2 ubiquitin-conjugating enzyme]-L-cysteine + N(6)-ubiquitinyl-[acceptor protein]-L-lysine.. The protein operates within protein modification; protein ubiquitination. Functions as an E3 ubiquitin ligase. The sequence is that of U-box domain-containing protein 7 (PUB7) from Arabidopsis thaliana (Mouse-ear cress).